The sequence spans 249 residues: Triosephosphate isomerase (249 aa).

A substrate-binding site is contributed by 9-11; that stretch reads NWK. Histidine 95 serves as the catalytic Electrophile. The active-site Proton acceptor is glutamate 167. Substrate is bound by residues glycine 173, serine 213, and 234–235; that span reads GG.

This sequence belongs to the triosephosphate isomerase family. As to quaternary structure, homodimer.

It localises to the cytoplasm. The enzyme catalyses D-glyceraldehyde 3-phosphate = dihydroxyacetone phosphate. It functions in the pathway carbohydrate biosynthesis; gluconeogenesis. The protein operates within carbohydrate degradation; glycolysis; D-glyceraldehyde 3-phosphate from glycerone phosphate: step 1/1. Involved in the gluconeogenesis. Catalyzes stereospecifically the conversion of dihydroxyacetone phosphate (DHAP) to D-glyceraldehyde-3-phosphate (G3P). This is Triosephosphate isomerase from Dictyoglomus turgidum (strain DSM 6724 / Z-1310).